The following is a 774-amino-acid chain: Protein translocase subunit SecA (774 aa).

ATP is bound by residues glutamine 66, 84–88 (GEGKS), and aspartate 474.

Belongs to the SecA family.

The protein localises to the plastid. Its subcellular location is the chloroplast stroma. The protein resides in the chloroplast thylakoid membrane. It catalyses the reaction ATP + H2O + cellular proteinSide 1 = ADP + phosphate + cellular proteinSide 2.. Has a central role in coupling the hydrolysis of ATP to the transfer of proteins across the thylakoid membrane. The protein is Protein translocase subunit SecA of Cyanidioschyzon merolae (strain NIES-3377 / 10D) (Unicellular red alga).